The following is a 158-amino-acid chain: NADPH-dependent 7-cyano-7-deazaguanine reductase (158 aa).

Cys-56 serves as the catalytic Thioimide intermediate. The active-site Proton donor is Asp-63. Substrate-binding positions include 78–80 (VES) and 97–98 (HE).

This sequence belongs to the GTP cyclohydrolase I family. QueF type 1 subfamily.

It is found in the cytoplasm. The enzyme catalyses 7-aminomethyl-7-carbaguanine + 2 NADP(+) = 7-cyano-7-deazaguanine + 2 NADPH + 3 H(+). It functions in the pathway tRNA modification; tRNA-queuosine biosynthesis. In terms of biological role, catalyzes the NADPH-dependent reduction of 7-cyano-7-deazaguanine (preQ0) to 7-aminomethyl-7-deazaguanine (preQ1). The protein is NADPH-dependent 7-cyano-7-deazaguanine reductase of Rhodopseudomonas palustris (strain HaA2).